The chain runs to 500 residues: FAD-linked oxidoreductase srdI (500 aa).

The first 20 residues, 1 to 20, serve as a signal peptide directing secretion; sequence MHLSSSLLFTSALLAGGINA. Residue Asn47 is glycosylated (N-linked (GlcNAc...) asparagine). Residues 69 to 241 enclose the FAD-binding PCMH-type domain; it reads YRPPSYQAAI…TQATYKMHKS (173 aa). N-linked (GlcNAc...) asparagine glycosylation is found at Asn257 and Asn282.

Belongs to the oxygen-dependent FAD-linked oxidoreductase family. It depends on FAD as a cofactor.

In terms of biological role, FAD-linked oxidoreductase; part of the gene cluster that mediates the biosynthesis of sordarial, a salicylic aldehyde structurally related to the phytotoxin pyriculol. The most interesting aspect of this pathway is formation of an aromatic product from the highly reducing polyketide synthase srdA. SrdA synthesizes a reduced polyketide chain from one molecule of acetyl-CoA and five molecules of malonyl-CoA. The polyketide chain is then reductively released as an aldehyde. The oxidoreductases srdC, srdD and srdE then oxidize one of the hydroxy groups to facilitate the intramolecular aldol condensation, followed by dehydration to yield a salicylic aldehyde. This aldehyde can undergo facile reduction by endogenous reductases to yield the alcohol 1-hydroxy-2-hydroxymethyl-3-pent-1,3-dienylbenzene. The flavin-dependent srdI counteract against the propensity of the aldehydes to be reduced under physiological conditions and is responsible for reoxidizing 1-hydroxy-2-hydroxymethyl-3-pent-1,3-dienylbenzene back to the salicylic aldehyde. This salicylic aldehyde is then selectively epoxidized by the cupin-domain-containing oxidoreductase srdB to yield the epoxide, which can be hydrolyzed stereoselectively by the hydrolase srdG to give the final product sordarial. The polypeptide is FAD-linked oxidoreductase srdI (Neurospora crassa (strain ATCC 24698 / 74-OR23-1A / CBS 708.71 / DSM 1257 / FGSC 987)).